The primary structure comprises 682 residues: Potassium-transporting ATPase ATP-binding subunit (682 aa).

4 helical membrane passes run Pro-34–Val-54, Ile-58–Phe-78, Ile-219–Leu-239, and Val-254–Ile-274. Asp-307 (4-aspartylphosphate intermediate) is an active-site residue. ATP contacts are provided by residues Asp-344, Glu-348, Phe-377–Ser-384, and Lys-395. Mg(2+) is bound by residues Asp-518 and Asp-522. The next 3 membrane-spanning stretches (helical) occupy residues Phe-588–Met-608, Ala-616–Leu-636, and Leu-662–Ala-682.

It belongs to the cation transport ATPase (P-type) (TC 3.A.3) family. Type IA subfamily. In terms of assembly, the system is composed of three essential subunits: KdpA, KdpB and KdpC.

The protein resides in the cell inner membrane. It catalyses the reaction K(+)(out) + ATP + H2O = K(+)(in) + ADP + phosphate + H(+). Functionally, part of the high-affinity ATP-driven potassium transport (or Kdp) system, which catalyzes the hydrolysis of ATP coupled with the electrogenic transport of potassium into the cytoplasm. This subunit is responsible for energy coupling to the transport system and for the release of the potassium ions to the cytoplasm. The sequence is that of Potassium-transporting ATPase ATP-binding subunit from Salmonella enteritidis PT4 (strain P125109).